The chain runs to 381 residues: L-lactate dehydrogenase (381 aa).

An FMN hydroxy acid dehydrogenase domain is found at M1 to G380. Y24 lines the substrate pocket. 2 residues coordinate FMN: S106 and Q127. Y129 lines the substrate pocket. Residue T155 participates in FMN binding. R164 provides a ligand contact to substrate. K251 contributes to the FMN binding site. Residue H275 is the Proton acceptor of the active site. R278 is a substrate binding site. D306–R330 is an FMN binding site.

The protein belongs to the FMN-dependent alpha-hydroxy acid dehydrogenase family. As to quaternary structure, homotetramer. FMN serves as cofactor.

It localises to the cell inner membrane. The enzyme catalyses (S)-lactate + A = pyruvate + AH2. Its function is as follows. Catalyzes the conversion of L-lactate to pyruvate. Is coupled to the respiratory chain. The chain is L-lactate dehydrogenase from Pseudomonas putida (strain GB-1).